The sequence spans 434 residues: Methyl-coenzyme M reductase subunit beta (434 aa).

Tyr-365 provides a ligand contact to coenzyme M. Position 367 (Gly-367) interacts with coenzyme B.

This sequence belongs to the methyl-coenzyme M reductase beta subunit family. As to quaternary structure, MCR is a hexamer of two alpha, two beta, and two gamma chains, forming a dimer of heterotrimers. Coenzyme F430 serves as cofactor.

The protein localises to the cytoplasm. It carries out the reaction coenzyme B + methyl-coenzyme M = methane + coenzyme M-coenzyme B heterodisulfide. The protein operates within one-carbon metabolism; methyl-coenzyme M reduction; methane from methyl-coenzyme M: step 1/1. Functionally, component of the methyl-coenzyme M reductase (MCR) I that catalyzes the reductive cleavage of methyl-coenzyme M (CoM-S-CH3 or 2-(methylthio)ethanesulfonate) using coenzyme B (CoB or 7-mercaptoheptanoylthreonine phosphate) as reductant which results in the production of methane and the mixed heterodisulfide of CoB and CoM (CoM-S-S-CoB). This is the final step in methanogenesis. This Methanosarcina barkeri (strain Fusaro / DSM 804) protein is Methyl-coenzyme M reductase subunit beta (mcrB).